The following is a 172-amino-acid chain: Type VI secretion system sheath protein TssB1 (172 aa).

As to quaternary structure, forms a heterodimer with TssC1. Heterodimers assemble to form the sheath of the T6SS machinery. Interacts with TagJ. Interacts with TssA1.

In terms of biological role, core component of the H1 type VI (H1-T6SS) secretion system that plays a role in the release of toxins targeting both eukaryotic and prokaryotic species. Forms the sheath of the structure by assembling into tubules together with TssC1 resulting in the stacking of cogwheel-like structures showing predominantly a 12-fold symmetry. The sheath contracts to provide the energy needed for effector delivery. The polypeptide is Type VI secretion system sheath protein TssB1 (Pseudomonas aeruginosa (strain ATCC 15692 / DSM 22644 / CIP 104116 / JCM 14847 / LMG 12228 / 1C / PRS 101 / PAO1)).